The chain runs to 498 residues: ATP synthase subunit beta, chloroplastic (498 aa).

An ATP-binding site is contributed by 172-179 (GGAGVGKT).

Belongs to the ATPase alpha/beta chains family. As to quaternary structure, F-type ATPases have 2 components, CF(1) - the catalytic core - and CF(0) - the membrane proton channel. CF(1) has five subunits: alpha(3), beta(3), gamma(1), delta(1), epsilon(1). CF(0) has four main subunits: a(1), b(1), b'(1) and c(9-12).

It localises to the plastid. The protein resides in the chloroplast thylakoid membrane. It carries out the reaction ATP + H2O + 4 H(+)(in) = ADP + phosphate + 5 H(+)(out). In terms of biological role, produces ATP from ADP in the presence of a proton gradient across the membrane. The catalytic sites are hosted primarily by the beta subunits. The sequence is that of ATP synthase subunit beta, chloroplastic from Liriodendron tulipifera (Tuliptree).